A 407-amino-acid chain; its full sequence is Tryptophan 2,3-dioxygenase B (407 aa).

Substrate contacts are provided by residues 71-75 (FIVTH) and Arg143. His327 lines the heme pocket. Thr341 serves as a coordination point for substrate.

This sequence belongs to the tryptophan 2,3-dioxygenase family. Homotetramer. Dimer of dimers. Heme is required as a cofactor.

The catalysed reaction is L-tryptophan + O2 = N-formyl-L-kynurenine. Its pathway is amino-acid degradation; L-tryptophan degradation via kynurenine pathway; L-kynurenine from L-tryptophan: step 1/2. In terms of biological role, heme-dependent dioxygenase that catalyzes the oxidative cleavage of the L-tryptophan (L-Trp) pyrrole ring and converts L-tryptophan to N-formyl-L-kynurenine. Catalyzes the oxidative cleavage of the indole moiety. This is Tryptophan 2,3-dioxygenase B from Danio rerio (Zebrafish).